The sequence spans 443 residues: KH domain-containing, RNA-binding, signal transduction-associated protein 1 (443 aa).

A disordered region spans residues 1–95 (MQRRDDPAAR…LLPPSATAAA (95 aa)). A phosphoserine mark is found at serine 18 and serine 20. Position 21 is an N6-acetyllysine (lysine 21). Serine 29 carries the post-translational modification Phosphoserine. Threonine 33 carries the post-translational modification Phosphothreonine. Asymmetric dimethylarginine; by PRMT1 is present on residues arginine 45 and arginine 52. At serine 58 the chain carries Phosphoserine. Positions 61 to 72 (TQPPPLLPPSNP) are enriched in pro residues. A compositionally biased stretch (low complexity) spans 81–95 (SAPTPLLPPSATAAA). A Phosphothreonine; by MAPK1 modification is found at threonine 84. Glycyl lysine isopeptide (Lys-Gly) (interchain with G-Cter in SUMO2) cross-links involve residues lysine 96 and lysine 102. An involved in homodimerization region spans residues 100-260 (ENKYLPELMA…VKKFLVPDMM (161 aa)). Residue serine 113 is modified to Phosphoserine. Lysine 139 is covalently cross-linked (Glycyl lysine isopeptide (Lys-Gly) (interchain with G-Cter in SUMO2)). Serine 150 is modified (phosphoserine). The KH domain occupies 171–197 (NFVGKILGPQGNTIKRLQEETGAKISV). The residue at position 175 (lysine 175) is an N6-acetyllysine; alternate. Residue lysine 175 forms a Glycyl lysine isopeptide (Lys-Gly) (interchain with G-Cter in SUMO2); alternate linkage. Phosphothreonine is present on threonine 183. Residues 280 to 317 (PSRGRGVSVRGRGAAPPPPPVPRGRGVGPPRGALVRGT) form a disordered region. An omega-N-methylarginine mark is found at arginine 282, arginine 284, and arginine 291. Low complexity predominate over residues 283-293 (GRGVSVRGRGA). Asymmetric dimethylarginine; by PRMT1 is present on arginine 304. Positions 307 to 316 (GPPRGALVRG) are enriched in low complexity. Residues arginine 310 and arginine 315 each carry the omega-N-methylarginine; by PRMT1 modification. Residue arginine 320 is modified to Dimethylated arginine; alternate. Residue arginine 320 is modified to Omega-N-methylarginine; by PRMT1; alternate. Arginine 325 is modified (omega-N-methylarginine; by PRMT1). Positions 326-345 (GATVTRGVPPPPTVRGAPTP) are disordered. 2 positions are modified to dimethylated arginine; alternate: arginine 331 and arginine 340. 2 positions are modified to omega-N-methylarginine; by PRMT1; alternate: arginine 331 and arginine 340. Position 331 is an asymmetric dimethylarginine; alternate (arginine 331). Residues 351-443 (GIQRIPLPPT…AYREHPYGRY (93 aa)) are interaction with HNRNPA1. Tyrosine 387 bears the Phosphotyrosine mark. Serine 390 carries the post-translational modification Phosphoserine. Residues 400 to 420 (GHGELQDSYEAYGQDDWNGTR) form an interaction with ZBTB7A region. A disordered region spans residues 411–443 (YGQDDWNGTRPSLKAPPARPVKGAYREHPYGRY). Residue lysine 432 forms a Glycyl lysine isopeptide (Lys-Gly) (interchain with G-Cter in SUMO2) linkage. Residues 434 to 443 (AYREHPYGRY) show a composition bias toward basic and acidic residues. Residues tyrosine 435, tyrosine 440, and tyrosine 443 each carry the phosphotyrosine; by PTK6 modification.

Belongs to the KHDRBS family. As to quaternary structure, self-associates to form homooligomers when bound to RNA, oligomerization appears to be limited when binding to proteins. Interacts with KHDRBS3/SLIM-2. Forms a trimeric complex in the nucleus consisting of BANP, HDAC6 and KHDRBS1/SAM68; HDAC6 keeps KHDRBS1 in a deacetylated state which inhibits the inclusion of CD44 alternate exons. The complex is disrupted by MAPK1/MAPK3-mediated phosphorylation of BANP which results in BANP export to the cytoplasm. This facilitates acetylation of KHDRBS1 and CD44 variant exon inclusion. Interacts with KHDRBS2/SLIM-1; heterooligomer formation of KHDRBS family proteins may modulate RNA substrate specificity. Interacts with PIK3R1, PLCG1. Interacts with RASA1, GRB2, SRC, CBP, PRMT1, APC, HNRNPA1. Interacts with PTK6 (via SH3 and SH2 domains). Forms a complex with ILF2, ILF3, YLPM1, RBMX, NCOA5 and PPP1CA. Binds WBP4/FBP21 (via WW domains), FNBP4/FBP30 (via WW domains). Interacts (via Arg/Gly-rich-flanked Pro-rich regions) with FYN (via the SH3 domain). Interacts with the non-receptor tyrosine kinase SRMS; the interaction leads to phosphorylation of KHDRBS1. Interacts with ZBTB7A; negatively regulates KHDRBS1 splicing activity toward BCL2L1. Tyrosine phosphorylated by several non-receptor tyrosine kinases including LCK, FYN and JAK3. Also tyrosine phosphorylated by the non-receptor tyrosine kinase SRMS in an EGF-dependent manner. Phosphorylation by PTK6 negatively regulates its RNA binding ability. Phosphorylation by PTK6 at Tyr-440 dictates the nuclear localization of KHDRBS1. Post-translationally, acetylated. Positively correlates with ability to bind RNA. Deacetylated by HDAC6; this regulates alternative splicing by inhibiting the inclusion of CD44 alternate exons. In terms of processing, arginine methylation is required for nuclear localization, Inhibits interaction with Src-like SH3 domains, but not interaction with WW domains of WBP4/FBP21 and FNBP4/FBP30.

It localises to the nucleus. The protein localises to the cytoplasm. The protein resides in the membrane. Recruited and tyrosine phosphorylated by several receptor systems, for example the T-cell, leptin and insulin receptors. Once phosphorylated, functions as an adapter protein in signal transduction cascades by binding to SH2 and SH3 domain-containing proteins. Role in G2-M progression in the cell cycle. Represses CBP-dependent transcriptional activation apparently by competing with other nuclear factors for binding to CBP. Also acts as a putative regulator of mRNA stability and/or translation rates and mediates mRNA nuclear export. Positively regulates the association of constitutive transport element (CTE)-containing mRNA with large polyribosomes and translation initiation. May not be involved in the nucleocytoplasmic export of unspliced (CTE)-containing RNA species. RNA-binding protein that plays a role in the regulation of alternative splicing and influences mRNA splice site selection and exon inclusion. Binds to RNA containing 5'-[AU]UAA-3' as a bipartite motif spaced by more than 15 nucleotides. Binds poly(A). Can regulate CD44 alternative splicing in a Ras pathway-dependent manner. In cooperation with HNRNPA1 modulates alternative splicing of BCL2L1 by promoting splicing toward isoform Bcl-X(S), and of SMN1. Can regulate alternative splicing of NRXN1 and NRXN3 in the laminin G-like domain 6 containing the evolutionary conserved neurexin alternative spliced segment 4 (AS4) involved in neurexin selective targeting to postsynaptic partners. In a neuronal activity-dependent manner cooperates synergistically with KHDRBS2/SLIM-1 in regulation of NRXN1 exon skipping at AS4. The cooperation with KHDRBS2/SLIM-1 is antagonistic for regulation of NXRN3 alternative splicing at AS4. In Rattus norvegicus (Rat), this protein is KH domain-containing, RNA-binding, signal transduction-associated protein 1.